The chain runs to 33 residues: Photosystem II reaction center protein Psb30 (33 aa).

Residues 5–25 (ILAQLTALAFIVVSGPLVIAL) form a helical membrane-spanning segment.

Belongs to the Psb30/Ycf12 family. In terms of assembly, PSII is composed of 1 copy each of membrane proteins PsbA, PsbB, PsbC, PsbD, PsbE, PsbF, PsbH, PsbI, PsbJ, PsbK, PsbL, PsbM, PsbT, PsbX, PsbY, PsbZ, Psb30/Ycf12, peripheral proteins of the oxygen-evolving complex and a large number of cofactors. It forms dimeric complexes.

It is found in the plastid. Its subcellular location is the chloroplast thylakoid membrane. A core subunit of photosystem II (PSII), probably helps stabilize the reaction center. The polypeptide is Photosystem II reaction center protein Psb30 (Chaetosphaeridium globosum (Charophycean green alga)).